The primary structure comprises 151 residues: MHDDIKLVSGEEIVKPTGEVHVVYFSSISNNTHRFIQKLSVKNSRIPYELEEEINVDSDYVLITPTYSGGGEFTSGAVPKQVIKFLNKENNRNYCRGVIASGNTNFGNTFAMAGPILSKKLNVPLLYQFELLGTQNDVEKINEILKEFWGK.

Belongs to the NrdI family.

Probably involved in ribonucleotide reductase function. This chain is Protein NrdI, found in Mesoplasma florum (strain ATCC 33453 / NBRC 100688 / NCTC 11704 / L1) (Acholeplasma florum).